Reading from the N-terminus, the 148-residue chain is 3-hydroxyacyl-[acyl-carrier-protein] dehydratase FabZ (148 aa).

Histidine 48 is an active-site residue.

This sequence belongs to the thioester dehydratase family. FabZ subfamily.

Its subcellular location is the cytoplasm. It catalyses the reaction a (3R)-hydroxyacyl-[ACP] = a (2E)-enoyl-[ACP] + H2O. Its function is as follows. Involved in unsaturated fatty acids biosynthesis. Catalyzes the dehydration of short chain beta-hydroxyacyl-ACPs and long chain saturated and unsaturated beta-hydroxyacyl-ACPs. This Campylobacter concisus (strain 13826) protein is 3-hydroxyacyl-[acyl-carrier-protein] dehydratase FabZ.